A 322-amino-acid chain; its full sequence is Putative heme-binding peroxidase (322 aa).

His-38 acts as the Proton acceptor in catalysis. His-162 serves as a coordination point for heme b. The active-site Tryptophan radical intermediate is the Trp-178. The interval 288-322 is disordered; that stretch reads ISAPKKSNHPTGPAKGAQGGCPVAASQGGCPRAKL.

The protein belongs to the peroxidase family. Cytochrome c peroxidase subfamily. Requires heme b as cofactor.

In terms of biological role, destroys radicals which are normally produced within the cells and which are toxic to biological systems. This chain is Putative heme-binding peroxidase, found in Aspergillus fumigatus (strain ATCC MYA-4609 / CBS 101355 / FGSC A1100 / Af293) (Neosartorya fumigata).